The primary structure comprises 123 residues: Histone H2B (123 aa).

Positions 1 to 32 (MAPKAPGKGAKKAAKSKAPRAPGDRKRKRTRR) are disordered. The span at 9 to 18 (GAKKAAKSKA) shows a compositional bias: basic residues. The O-linked (GlcNAc) serine glycan is linked to Ser110. Lys118 participates in a covalent cross-link: Glycyl lysine isopeptide (Lys-Gly) (interchain with G-Cter in ubiquitin).

The protein belongs to the histone H2B family. As to quaternary structure, the nucleosome is a histone octamer containing two molecules each of H2A, H2B, H3 and H4 assembled in one H3-H4 heterotetramer and two H2A-H2B heterodimers. The octamer wraps approximately 147 bp of DNA. Monoubiquitination of Lys-118 gives a specific tag for epigenetic transcriptional activation and is also prerequisite for histone H3 'Lys-4' and 'Lys-79' methylation. Post-translationally, glcNAcylation at Ser-110 promotes monoubiquitination of Lys-118. It fluctuates in response to extracellular glucose, and associates with transcribed genes.

Its subcellular location is the nucleus. It is found in the chromosome. Its function is as follows. Core component of nucleosome. Nucleosomes wrap and compact DNA into chromatin, limiting DNA accessibility to the cellular machineries which require DNA as a template. Histones thereby play a central role in transcription regulation, DNA repair, DNA replication and chromosomal stability. DNA accessibility is regulated via a complex set of post-translational modifications of histones, also called histone code, and nucleosome remodeling. The protein is Histone H2B of Holothuria tubulosa (Tubular sea cucumber).